We begin with the raw amino-acid sequence, 186 residues long: Nicotinamide-nucleotide adenylyltransferase (186 aa).

This sequence belongs to the archaeal NMN adenylyltransferase family.

The protein localises to the cytoplasm. It catalyses the reaction beta-nicotinamide D-ribonucleotide + ATP + H(+) = diphosphate + NAD(+). It participates in cofactor biosynthesis; NAD(+) biosynthesis; NAD(+) from nicotinamide D-ribonucleotide: step 1/1. The sequence is that of Nicotinamide-nucleotide adenylyltransferase from Pyrococcus abyssi (strain GE5 / Orsay).